The following is a 253-amino-acid chain: Sulfate transporter CysZ (253 aa).

Transmembrane regions (helical) follow at residues 31–51, 75–95, 151–171, and 222–242; these read FVIL…WWLF, LLWP…FSTI, IVLL…PVLW, and IPLL…AMWV.

It belongs to the CysZ family.

The protein localises to the cell inner membrane. Its function is as follows. High affinity, high specificity proton-dependent sulfate transporter, which mediates sulfate uptake. Provides the sulfur source for the cysteine synthesis pathway. The sequence is that of Sulfate transporter CysZ from Escherichia coli O8 (strain IAI1).